A 208-amino-acid polypeptide reads, in one-letter code: Large ribosomal subunit protein uL3 (208 aa).

The interval 123-147 is disordered; that stretch reads RHGQSRGPMAHGSRYHRRPGSMGPV.

This sequence belongs to the universal ribosomal protein uL3 family. Part of the 50S ribosomal subunit. Forms a cluster with proteins L14 and L19.

In terms of biological role, one of the primary rRNA binding proteins, it binds directly near the 3'-end of the 23S rRNA, where it nucleates assembly of the 50S subunit. The polypeptide is Large ribosomal subunit protein uL3 (Streptococcus gordonii (strain Challis / ATCC 35105 / BCRC 15272 / CH1 / DL1 / V288)).